A 305-amino-acid chain; its full sequence is Tyrosine recombinase XerD (305 aa).

A Core-binding (CB) domain is found at methionine 1–isoleucine 83. The Tyr recombinase domain maps to lysine 104–leucine 298. Catalysis depends on residues arginine 145, lysine 175, histidine 250, arginine 253, and histidine 276. The active-site O-(3'-phospho-DNA)-tyrosine intermediate is tyrosine 285.

Belongs to the 'phage' integrase family. XerD subfamily. As to quaternary structure, forms a cyclic heterotetrameric complex composed of two molecules of XerC and two molecules of XerD.

It localises to the cytoplasm. Its function is as follows. Site-specific tyrosine recombinase, which acts by catalyzing the cutting and rejoining of the recombining DNA molecules. The XerC-XerD complex is essential to convert dimers of the bacterial chromosome into monomers to permit their segregation at cell division. It also contributes to the segregational stability of plasmids. The chain is Tyrosine recombinase XerD from Rickettsia bellii (strain RML369-C).